A 258-amino-acid polypeptide reads, in one-letter code: Small ribosomal subunit protein uS3 (258 aa).

The 69-residue stretch at 43 to 111 folds into the KH type-2 domain; the sequence is IRKLMSTGLE…QVQLNILEVK (69 aa). Positions 217 to 258 are disordered; it reads AREQASAAPRARGRADRPRGRRDEGAAPQQAAAPAATTGTEA. The segment covering 229–241 has biased composition (basic and acidic residues); the sequence is GRADRPRGRRDEG. A compositionally biased stretch (low complexity) spans 242 to 258; it reads AAPQQAAAPAATTGTEA.

It belongs to the universal ribosomal protein uS3 family. Part of the 30S ribosomal subunit. Forms a tight complex with proteins S10 and S14.

Functionally, binds the lower part of the 30S subunit head. Binds mRNA in the 70S ribosome, positioning it for translation. This Beutenbergia cavernae (strain ATCC BAA-8 / DSM 12333 / CCUG 43141 / JCM 11478 / NBRC 16432 / NCIMB 13614 / HKI 0122) protein is Small ribosomal subunit protein uS3.